A 109-amino-acid chain; its full sequence is Aquaporin-2 (109 aa).

The Cytoplasmic portion of the chain corresponds to 1–6; it reads SIAFSR. The chain crosses the membrane as a helical span at residues 7 to 27; it reads AVFAEFLATLIFVFFGLGSAL. Residues 28 to 35 are Extracellular-facing; that stretch reads NWQQSLPS. The chain crosses the membrane as a helical span at residues 36–54; that stretch reads VLQIAMAFGLAIGTLVQAL. Residues 55-59 are Cytoplasmic-facing; it reads GHISG. The discontinuously helical intramembrane region spans 60-69; sequence AHINPAVTVA. The NPA 1 signature appears at 63–65; it reads NPA. At 70 to 80 the chain is on the cytoplasmic side; sequence CLVGCHVSFLR. The helical transmembrane segment at 81–102 threads the bilayer; it reads AAFYVAAQLLGAVAGAALLHEV. Topologically, residues 103-109 are extracellular; the sequence is TPSDVRG.

It belongs to the MIP/aquaporin (TC 1.A.8) family. In terms of assembly, homotetramer. In terms of processing, serine phosphorylation is necessary and sufficient for expression at the apical membrane. Endocytosis is not phosphorylation-dependent. Post-translationally, N-glycosylated.

It is found in the apical cell membrane. The protein localises to the basolateral cell membrane. Its subcellular location is the cell membrane. It localises to the cytoplasmic vesicle membrane. The protein resides in the golgi apparatus. It is found in the trans-Golgi network membrane. The catalysed reaction is H2O(in) = H2O(out). It catalyses the reaction glycerol(in) = glycerol(out). Its function is as follows. Forms a water-specific channel that provides the plasma membranes of renal collecting duct with high permeability to water, thereby permitting water to move in the direction of an osmotic gradient. Plays an essential role in renal water homeostasis. Could also be permeable to glycerol. The chain is Aquaporin-2 from Talpa europaea (European mole).